Here is a 213-residue protein sequence, read N- to C-terminus: tRNA (guanine-N(7)-)-methyltransferase (213 aa).

The S-adenosyl-L-methionine site is built by E44, E69, N96, and D118. Residue D118 is part of the active site. Position 122 (K122) interacts with substrate. The tract at residues 124 to 129 is interaction with RNA; the sequence is RHEKRR. Residues D154 and 191 to 194 contribute to the substrate site; that span reads TEYE.

Belongs to the class I-like SAM-binding methyltransferase superfamily. TrmB family.

It carries out the reaction guanosine(46) in tRNA + S-adenosyl-L-methionine = N(7)-methylguanosine(46) in tRNA + S-adenosyl-L-homocysteine. The protein operates within tRNA modification; N(7)-methylguanine-tRNA biosynthesis. In terms of biological role, catalyzes the formation of N(7)-methylguanine at position 46 (m7G46) in tRNA. In Bacillus licheniformis (strain ATCC 14580 / DSM 13 / JCM 2505 / CCUG 7422 / NBRC 12200 / NCIMB 9375 / NCTC 10341 / NRRL NRS-1264 / Gibson 46), this protein is tRNA (guanine-N(7)-)-methyltransferase.